We begin with the raw amino-acid sequence, 273 residues long: Transposable element Tcb2 transposase (273 aa).

The protein belongs to the transposase 5 family.

It is found in the nucleus. Probably essential for transposable element Tcb2 transposition. The protein is Transposable element Tcb2 transposase of Caenorhabditis briggsae.